A 201-amino-acid chain; its full sequence is Large ribosomal subunit protein mL61 (201 aa).

The interval 87–118 is disordered; sequence RDDKDAKPSSTPFPTSSADGSSPAPKPAQGER. A compositionally biased stretch (polar residues) spans 94 to 106; that stretch reads PSSTPFPTSSADG.

It belongs to the mitochondrion-specific ribosomal protein mL61 family. In terms of assembly, component of the mitochondrial large ribosomal subunit (mt-LSU). Mature N.crassa 74S mitochondrial ribosomes consist of a small (37S) and a large (54S) subunit. The 37S small subunit contains a 16S ribosomal RNA (16S mt-rRNA) and 32 different proteins. The 54S large subunit contains a 23S rRNA (23S mt-rRNA) and 42 different proteins.

Its subcellular location is the mitochondrion. Functionally, component of the mitochondrial ribosome (mitoribosome), a dedicated translation machinery responsible for the synthesis of mitochondrial genome-encoded proteins, including at least some of the essential transmembrane subunits of the mitochondrial respiratory chain. The mitoribosomes are attached to the mitochondrial inner membrane and translation products are cotranslationally integrated into the membrane. The polypeptide is Large ribosomal subunit protein mL61 (mrp49) (Neurospora crassa (strain ATCC 24698 / 74-OR23-1A / CBS 708.71 / DSM 1257 / FGSC 987)).